The chain runs to 847 residues: DNA mismatch repair protein MutS (847 aa).

Residue 602-609 (GPNMSGKS) coordinates ATP. The disordered stretch occupies residues 788–807 (EKREASLPASRTDSQKVSEQ). A compositionally biased stretch (polar residues) spans 796 to 807 (ASRTDSQKVSEQ).

Belongs to the DNA mismatch repair MutS family.

In terms of biological role, this protein is involved in the repair of mismatches in DNA. It is possible that it carries out the mismatch recognition step. This protein has a weak ATPase activity. The polypeptide is DNA mismatch repair protein MutS (Streptococcus gordonii (strain Challis / ATCC 35105 / BCRC 15272 / CH1 / DL1 / V288)).